The sequence spans 90 residues: UPF0367 protein P9301_01411 (90 aa).

It belongs to the UPF0367 family.

This Prochlorococcus marinus (strain MIT 9301) protein is UPF0367 protein P9301_01411.